Here is a 421-residue protein sequence, read N- to C-terminus: Serine--tRNA ligase (421 aa).

225 to 227 (TAE) is a binding site for L-serine. Residues 256-258 (RSE) and Val272 each bind ATP. Glu279 contributes to the L-serine binding site. Residue 345 to 348 (ETHS) coordinates ATP. Thr380 lines the L-serine pocket.

Belongs to the class-II aminoacyl-tRNA synthetase family. Type-1 seryl-tRNA synthetase subfamily. As to quaternary structure, homodimer. The tRNA molecule binds across the dimer.

Its subcellular location is the cytoplasm. It carries out the reaction tRNA(Ser) + L-serine + ATP = L-seryl-tRNA(Ser) + AMP + diphosphate + H(+). The catalysed reaction is tRNA(Sec) + L-serine + ATP = L-seryl-tRNA(Sec) + AMP + diphosphate + H(+). Its pathway is aminoacyl-tRNA biosynthesis; selenocysteinyl-tRNA(Sec) biosynthesis; L-seryl-tRNA(Sec) from L-serine and tRNA(Sec): step 1/1. Functionally, catalyzes the attachment of serine to tRNA(Ser). Is also able to aminoacylate tRNA(Sec) with serine, to form the misacylated tRNA L-seryl-tRNA(Sec), which will be further converted into selenocysteinyl-tRNA(Sec). The sequence is that of Serine--tRNA ligase from Thermus thermophilus (strain ATCC 27634 / DSM 579 / HB8).